The sequence spans 1859 residues: DNA-directed RNA polymerase subunit beta'' (1859 aa).

Cys-286, Cys-359, Cys-366, and Cys-369 together coordinate Zn(2+).

The protein belongs to the RNA polymerase beta' chain family. RpoC2 subfamily. In terms of assembly, in plastids the minimal PEP RNA polymerase catalytic core is composed of four subunits: alpha, beta, beta', and beta''. When a (nuclear-encoded) sigma factor is associated with the core the holoenzyme is formed, which can initiate transcription. The cofactor is Zn(2+).

The protein resides in the plastid. It localises to the chloroplast. It catalyses the reaction RNA(n) + a ribonucleoside 5'-triphosphate = RNA(n+1) + diphosphate. Its function is as follows. DNA-dependent RNA polymerase catalyzes the transcription of DNA into RNA using the four ribonucleoside triphosphates as substrates. The chain is DNA-directed RNA polymerase subunit beta'' from Oltmannsiellopsis viridis (Marine flagellate).